A 166-amino-acid polypeptide reads, in one-letter code: Cofilin-1 (166 aa).

A2 carries the post-translational modification N-acetylalanine. Residues S3 and S8 each carry the phosphoserine modification. The ADF-H domain occupies 4 to 153; the sequence is GVAVSDGVIK…KDRCTLAEKL (150 aa). Position 13 is an N6-acetyllysine (K13). Phosphothreonine is present on T25. Residues 30–34 carry the Nuclear localization signal motif; the sequence is KKRKK. S41 is subject to Phosphoserine. Y68 carries the post-translational modification Phosphotyrosine. K73 carries the N6-acetyllysine modification. K132 participates in a covalent cross-link: Glycyl lysine isopeptide (Lys-Gly) (interchain with G-Cter in SUMO2). Y140 carries the phosphotyrosine modification. K144 is subject to N6-acetyllysine. Phosphoserine is present on S156.

It belongs to the actin-binding proteins ADF family. As to quaternary structure, can bind G- and F-actin in a 1:1 ratio of cofilin to actin. It is a major component of intranuclear and cytoplasmic actin rods. Interacts with the subcortical maternal complex (SCMC) via interaction with TLE6 and NLRP5. Interacts with C9orf72. Inactivated by phosphorylation on Ser-3. Phosphorylated on Ser-3 in resting cells. Dephosphorylated by PDXP/chronophin; this restores its activity in promoting actin filament depolymerization. The phosphorylation of Ser-24 may prevent recognition of the nuclear localization signal. Phosphorylated via a ARRB1-RAC1-LIMK1-PAK1 cascade upon active ligand stimulation of atypical chemokine receptor ACKR2.

The protein resides in the nucleus matrix. It is found in the cytoplasm. The protein localises to the cytoskeleton. It localises to the cell projection. Its subcellular location is the ruffle membrane. The protein resides in the lamellipodium membrane. It is found in the lamellipodium. The protein localises to the growth cone. It localises to the axon. Its function is as follows. Binds to F-actin and exhibits pH-sensitive F-actin depolymerizing activity. Important for normal progress through mitosis and normal cytokinesis. In conjunction with the subcortical maternal complex (SCMC), plays an essential role for zygotes to progress beyond the first embryonic cell divisions via regulation of actin dynamics. Required for the centralization of the mitotic spindle and symmetric division of zygotes. Plays a role in the regulation of cell morphology and cytoskeletal organization in epithelial cells. Required for the up-regulation of atypical chemokine receptor ACKR2 from endosomal compartment to cell membrane, increasing its efficiency in chemokine uptake and degradation. Required for neural tube morphogenesis and neural crest cell migration. This chain is Cofilin-1 (CFL1), found in Bos taurus (Bovine).